Consider the following 169-residue polypeptide: NADH-quinone oxidoreductase subunit I (169 aa).

4Fe-4S ferredoxin-type domains lie at 61–90 (RKYKNGEERCIACKLCEAICPAQAITIEAQ) and 100–129 (VRYDIDMTKCIYCGFCQEACPVDAIVEGPN). [4Fe-4S] cluster contacts are provided by C70, C73, C76, C80, C109, C112, C115, and C119.

This sequence belongs to the complex I 23 kDa subunit family. As to quaternary structure, NDH-1 is composed of 14 different subunits. Subunits NuoA, H, J, K, L, M, N constitute the membrane sector of the complex. The cofactor is [4Fe-4S] cluster.

The protein resides in the cell inner membrane. It catalyses the reaction a quinone + NADH + 5 H(+)(in) = a quinol + NAD(+) + 4 H(+)(out). NDH-1 shuttles electrons from NADH, via FMN and iron-sulfur (Fe-S) centers, to quinones in the respiratory chain. The immediate electron acceptor for the enzyme in this species is believed to be ubiquinone. Couples the redox reaction to proton translocation (for every two electrons transferred, four hydrogen ions are translocated across the cytoplasmic membrane), and thus conserves the redox energy in a proton gradient. The sequence is that of NADH-quinone oxidoreductase subunit I from Ehrlichia chaffeensis (strain ATCC CRL-10679 / Arkansas).